The chain runs to 258 residues: Tryptophan synthase alpha chain (258 aa).

Residues E47 and D58 each act as proton acceptor in the active site.

The protein belongs to the TrpA family. In terms of assembly, tetramer of two alpha and two beta chains.

The catalysed reaction is (1S,2R)-1-C-(indol-3-yl)glycerol 3-phosphate + L-serine = D-glyceraldehyde 3-phosphate + L-tryptophan + H2O. It participates in amino-acid biosynthesis; L-tryptophan biosynthesis; L-tryptophan from chorismate: step 5/5. In terms of biological role, the alpha subunit is responsible for the aldol cleavage of indoleglycerol phosphate to indole and glyceraldehyde 3-phosphate. The protein is Tryptophan synthase alpha chain of Bacillus cereus (strain G9842).